Here is a 357-residue protein sequence, read N- to C-terminus: Chorismate synthase (357 aa).

Residues Glu-38–Lys-49 are compositionally biased toward basic and acidic residues. A disordered region spans residues Glu-38–Arg-60. 2 residues coordinate NADP(+): Arg-48 and Arg-54. Residues Arg-125–Ser-127, Asn-243–Ala-244, Gly-283, Lys-298–Ser-302, and Arg-324 contribute to the FMN site.

The protein belongs to the chorismate synthase family. Homotetramer. Requires FMNH2 as cofactor.

It catalyses the reaction 5-O-(1-carboxyvinyl)-3-phosphoshikimate = chorismate + phosphate. It participates in metabolic intermediate biosynthesis; chorismate biosynthesis; chorismate from D-erythrose 4-phosphate and phosphoenolpyruvate: step 7/7. Its function is as follows. Catalyzes the anti-1,4-elimination of the C-3 phosphate and the C-6 proR hydrogen from 5-enolpyruvylshikimate-3-phosphate (EPSP) to yield chorismate, which is the branch point compound that serves as the starting substrate for the three terminal pathways of aromatic amino acid biosynthesis. This reaction introduces a second double bond into the aromatic ring system. The polypeptide is Chorismate synthase (Haemophilus influenzae (strain PittGG)).